The sequence spans 126 residues: Probable glycine cleavage system H protein (126 aa).

The 83-residue stretch at 24–106 (VVRVGITDFA…FGDGWLLEVE (83 aa)) folds into the Lipoyl-binding domain. Residue Lys65 is modified to N6-lipoyllysine.

This sequence belongs to the GcvH family. As to quaternary structure, the glycine cleavage system is composed of four proteins: P, T, L and H. (R)-lipoate serves as cofactor.

Its function is as follows. The glycine cleavage system catalyzes the degradation of glycine. The H protein shuttles the methylamine group of glycine from the P protein to the T protein. This is Probable glycine cleavage system H protein from Natronomonas pharaonis (strain ATCC 35678 / DSM 2160 / CIP 103997 / JCM 8858 / NBRC 14720 / NCIMB 2260 / Gabara) (Halobacterium pharaonis).